Here is a 635-residue protein sequence, read N- to C-terminus: 1-deoxy-D-xylulose-5-phosphate synthase (635 aa).

Residues H79 and 120-122 (GHS) each bind thiamine diphosphate. Position 151 (D151) interacts with Mg(2+). Thiamine diphosphate is bound by residues 152-153 (GA), N182, Y291, and E372. N182 is a binding site for Mg(2+).

The protein belongs to the transketolase family. DXPS subfamily. Homodimer. Requires Mg(2+) as cofactor. It depends on thiamine diphosphate as a cofactor.

It catalyses the reaction D-glyceraldehyde 3-phosphate + pyruvate + H(+) = 1-deoxy-D-xylulose 5-phosphate + CO2. It functions in the pathway metabolic intermediate biosynthesis; 1-deoxy-D-xylulose 5-phosphate biosynthesis; 1-deoxy-D-xylulose 5-phosphate from D-glyceraldehyde 3-phosphate and pyruvate: step 1/1. Its function is as follows. Catalyzes the acyloin condensation reaction between C atoms 2 and 3 of pyruvate and glyceraldehyde 3-phosphate to yield 1-deoxy-D-xylulose-5-phosphate (DXP). The polypeptide is 1-deoxy-D-xylulose-5-phosphate synthase (Xylella fastidiosa (strain M23)).